The primary structure comprises 151 residues: Flagellar assembly factor FliW (151 aa).

The protein belongs to the FliW family. In terms of assembly, interacts with translational regulator CsrA and flagellin(s).

It is found in the cytoplasm. In terms of biological role, acts as an anti-CsrA protein, binds CsrA and prevents it from repressing translation of its target genes, one of which is flagellin. Binds to flagellin and participates in the assembly of the flagellum. This chain is Flagellar assembly factor FliW, found in Natranaerobius thermophilus (strain ATCC BAA-1301 / DSM 18059 / JW/NM-WN-LF).